The primary structure comprises 274 residues: Sulfur carrier protein FdhD (274 aa).

The active-site Cysteine persulfide intermediate is the cysteine 121. 258-263 (FSKPGR) is a Mo-bis(molybdopterin guanine dinucleotide) binding site.

It belongs to the FdhD family.

Its subcellular location is the cytoplasm. Required for formate dehydrogenase (FDH) activity. Acts as a sulfur carrier protein that transfers sulfur from IscS to the molybdenum cofactor prior to its insertion into FDH. In Yersinia pestis bv. Antiqua (strain Antiqua), this protein is Sulfur carrier protein FdhD.